Reading from the N-terminus, the 113-residue chain is Large ribosomal subunit protein uL22 (113 aa).

This sequence belongs to the universal ribosomal protein uL22 family. In terms of assembly, part of the 50S ribosomal subunit.

This protein binds specifically to 23S rRNA; its binding is stimulated by other ribosomal proteins, e.g. L4, L17, and L20. It is important during the early stages of 50S assembly. It makes multiple contacts with different domains of the 23S rRNA in the assembled 50S subunit and ribosome. Its function is as follows. The globular domain of the protein is located near the polypeptide exit tunnel on the outside of the subunit, while an extended beta-hairpin is found that lines the wall of the exit tunnel in the center of the 70S ribosome. This is Large ribosomal subunit protein uL22 from Chloroflexus aggregans (strain MD-66 / DSM 9485).